We begin with the raw amino-acid sequence, 476 residues long: Glutamyl-tRNA(Gln) amidotransferase subunit A (476 aa).

Residues lysine 69 and serine 144 each act as charge relay system in the active site. The Acyl-ester intermediate role is filled by serine 168.

This sequence belongs to the amidase family. GatA subfamily. As to quaternary structure, heterotrimer of A, B and C subunits.

It catalyses the reaction L-glutamyl-tRNA(Gln) + L-glutamine + ATP + H2O = L-glutaminyl-tRNA(Gln) + L-glutamate + ADP + phosphate + H(+). In terms of biological role, allows the formation of correctly charged Gln-tRNA(Gln) through the transamidation of misacylated Glu-tRNA(Gln) in organisms which lack glutaminyl-tRNA synthetase. The reaction takes place in the presence of glutamine and ATP through an activated gamma-phospho-Glu-tRNA(Gln). This is Glutamyl-tRNA(Gln) amidotransferase subunit A from Sulfolobus acidocaldarius (strain ATCC 33909 / DSM 639 / JCM 8929 / NBRC 15157 / NCIMB 11770).